We begin with the raw amino-acid sequence, 365 residues long: Phospho-N-acetylmuramoyl-pentapeptide-transferase (365 aa).

10 consecutive transmembrane segments (helical) span residues P15–I35, V51–L71, T96–F116, I121–V141, L156–E176, I180–F200, G217–A237, H238–H258, L279–F299, and T344–L364.

The protein belongs to the glycosyltransferase 4 family. MraY subfamily. It depends on Mg(2+) as a cofactor.

The protein resides in the cell inner membrane. The catalysed reaction is UDP-N-acetyl-alpha-D-muramoyl-L-alanyl-gamma-D-glutamyl-meso-2,6-diaminopimeloyl-D-alanyl-D-alanine + di-trans,octa-cis-undecaprenyl phosphate = di-trans,octa-cis-undecaprenyl diphospho-N-acetyl-alpha-D-muramoyl-L-alanyl-D-glutamyl-meso-2,6-diaminopimeloyl-D-alanyl-D-alanine + UMP. It participates in cell wall biogenesis; peptidoglycan biosynthesis. Its function is as follows. Catalyzes the initial step of the lipid cycle reactions in the biosynthesis of the cell wall peptidoglycan: transfers peptidoglycan precursor phospho-MurNAc-pentapeptide from UDP-MurNAc-pentapeptide onto the lipid carrier undecaprenyl phosphate, yielding undecaprenyl-pyrophosphoryl-MurNAc-pentapeptide, known as lipid I. This Picosynechococcus sp. (strain ATCC 27264 / PCC 7002 / PR-6) (Agmenellum quadruplicatum) protein is Phospho-N-acetylmuramoyl-pentapeptide-transferase.